Consider the following 126-residue polypeptide: Profilin (126 aa).

This sequence belongs to the profilin family. As to quaternary structure, occurs in many kinds of cells as a complex with monomeric actin in a 1:1 ratio. Expressed in ovary and head.

The protein resides in the cytoplasm. The protein localises to the cytoskeleton. Its function is as follows. Binds to actin and affects the structure of the cytoskeleton. At high concentrations, profilin prevents the polymerization of actin, whereas it enhances it at low concentrations. By binding to PIP2, it may inhibit the formation of IP3 and DG. This profilin is required for intercellular cytoplasm transport during Drosophila oogenesis. Function in neurons is essential for adult survival, and is important for climbing behavior and activity. This is Profilin (chic) from Drosophila melanogaster (Fruit fly).